The chain runs to 180 residues: uncharacterized protein (180 aa).

The HTH dtxR-type domain occupies 17-80 (RRSRILHYLM…LIPNMGVRLT (64 aa)).

It belongs to the DtxR/MntR family.

This is an uncharacterized protein from Aeropyrum pernix (strain ATCC 700893 / DSM 11879 / JCM 9820 / NBRC 100138 / K1).